The sequence spans 128 residues: Lymphocyte antigen 6 complex locus protein G5c (128 aa).

Positions 1 to 29 are cleaved as a signal peptide; sequence MGAEYGCLPSTSQALYVILLIVLVRMSLV. The UPAR/Ly6 domain occupies 37–128; the sequence is LRCYRCLLET…NPQNRVFYIP (92 aa). 5 cysteine pairs are disulfide-bonded: cysteine 39-cysteine 66, cysteine 42-cysteine 51, cysteine 58-cysteine 85, cysteine 94-cysteine 111, and cysteine 112-cysteine 117. Asparagine 73 carries N-linked (GlcNAc...) asparagine glycosylation.

As to quaternary structure, forms oligomers. In terms of processing, N-glycosylated. In terms of tissue distribution, abundantly expressed in the epididymis.

It is found in the secreted. In terms of biological role, may have a role in hematopoietic cell differentiation. This chain is Lymphocyte antigen 6 complex locus protein G5c (LY6G5C), found in Canis lupus familiaris (Dog).